A 161-amino-acid chain; its full sequence is Putative sporulation sigma factor-processing peptidase (161 aa).

D38 is a catalytic residue.

It belongs to the peptidase U4 family.

Functionally, probably activates the RNA polymerase sigma-35 factor at the stage II of sporulation. This is Putative sporulation sigma factor-processing peptidase from Bacillus thuringiensis subsp. kurstaki.